The primary structure comprises 199 residues: UPF0301 protein Daci_1578 (199 aa).

The protein belongs to the UPF0301 (AlgH) family.

The sequence is that of UPF0301 protein Daci_1578 from Delftia acidovorans (strain DSM 14801 / SPH-1).